The chain runs to 748 residues: Acyl-coenzyme A oxidase (748 aa).

The protein belongs to the acyl-CoA oxidase family. FAD serves as cofactor.

Its subcellular location is the peroxisome. The enzyme catalyses a 2,3-saturated acyl-CoA + O2 = a (2E)-enoyl-CoA + H2O2. It participates in lipid metabolism; peroxisomal fatty acid beta-oxidation. The sequence is that of Acyl-coenzyme A oxidase (POX1) from Candida glabrata (strain ATCC 2001 / BCRC 20586 / JCM 3761 / NBRC 0622 / NRRL Y-65 / CBS 138) (Yeast).